The chain runs to 354 residues: Envelope protein US28 (354 aa).

Topologically, residues 1–37 (MTPTTTTAELTTEFDYDEDATPCVFTDVLNQSKPVTL) are extracellular. Residue Asn30 is glycosylated (N-linked (GlcNAc...) asparagine; by host). Residues 38–58 (FLYGVVFLFGSIGNFLVIFTI) form a helical membrane-spanning segment. The Cytoplasmic portion of the chain corresponds to 59–69 (TWRRRIQCSGD). Residues 70–90 (VYFINLAAADLLFVCTLPLWM) form a helical membrane-spanning segment. Over 91–101 (QYLLDHNSLAS) the chain is Extracellular. Residues 102–122 (VPCTLLTACFYVAMFASLCFI) traverse the membrane as a helical segment. Residues 123 to 145 (TEIALDRYYAIVYMRYRPVKQAC) lie on the Cytoplasmic side of the membrane. A helical membrane pass occupies residues 146-166 (LFSIFWWIFAVIIAIPHFMVV). The Extracellular portion of the chain corresponds to 167–183 (TKKDNQCMTDYDYLEVS). Residues 184-204 (YPIILNVELMLGAFVIPLSVI) form a helical membrane-spanning segment. The Cytoplasmic segment spans residues 205–228 (SYCYYRISRIVAVSQSRHKGRIVR). Residues 229-249 (VLIAVVLVFIIFWLPYHLTLF) traverse the membrane as a helical segment. The Extracellular portion of the chain corresponds to 250–273 (VDTLKLLKWISSSCEFERSLKRAL). The helical transmembrane segment at 274–294 (ILTESLAFCHCCLNPLLYVFV) threads the bilayer. Over 295 to 354 (GTKFRQELHCLLAEFRQRLFSRDVSWYHSMSFSRRGSPSRRETSSDTLSDEVCRVSQIIP) the chain is Cytoplasmic.

Belongs to the G-protein coupled receptor 1 family. In terms of assembly, interacts with host GPRASP1; this interaction targets US28 to lysosomes for degradation. Interacts with host CX3CL1/Fractalkine (via N-terminus). In terms of processing, phosphorylated. High phosphorylation occurs concomitantly with receptor endocytosis and correlate with low receptor presence at the plasma membrane.

The protein resides in the host cell membrane. Receptor for a C-C type chemokine. Binds to a great number of different CC-chemokines including CCL5/RANTES, CCL2/MCP-1, CCL3/MIP-1-alpha as well as CX3CL1/Fractalkine. Transduces signals resulting in the activation of MAP kinase signaling pathways and augmentation of intracellular calcium ion levels, leading to alterations in chemotactic behavior of vascular smooth muscle cells and macrophages. The US28 receptor also exhibits high levels of agonist-independent signaling activity and agonist-independent endocytosis. Interacts with the host Gi complex without activating it, thereby probably interfering with the chemokine-Gi signaling. May also function as a G protein sink to sequester G protein from the cell surface via internalization. Interacts with endogenous Gaq/11 subunits and thereby constitutively activates phospholipase C. The chain is Envelope protein US28 (US28) from Human cytomegalovirus (strain Merlin) (HHV-5).